The sequence spans 187 residues: MTGPPRLSSDLDALLRRVAGHDQAAFAEFYDHTKSRVYGLVMRVLRDTGYSEETTQEIYLEVWRNASEFDSAKGSALAWLLTMAHRRAVDRVRCEQAGNQREVRYGAANVDPASDVVADLAIAGDERRRVTECLKALTDTQRQCIELAYYGGLTYVEVSRRLAANLSTIKSRMRDALRSLRNCLDVS.

The segment at 30–96 (YDHTKSRVYG…RAVDRVRCEQ (67 aa)) is sigma-70 factor domain-2. The short motif at 53 to 56 (ETTQ) is the Interaction with polymerase core subunit RpoC element. Positions 133–182 (CLKALTDTQRQCIELAYYGGLTYVEVSRRLAANLSTIKSRMRDALRSLRN) are sigma-70 factor domain-4. A DNA-binding region (H-T-H motif) is located at residues 155–174 (YVEVSRRLAANLSTIKSRMR).

This sequence belongs to the sigma-70 factor family. ECF subfamily. As to quaternary structure, interacts transiently with the RNA polymerase catalytic core formed by RpoA, RpoB, RpoC and RpoZ (2 alpha, 1 beta, 1 beta' and 1 omega subunit) to form the RNA polymerase holoenzyme that can initiate transcription. Interacts (via sigma-70 factor domain 4) with anti-sigma-K factor RskA.

Functionally, sigma factors are initiation factors that promote the attachment of RNA polymerase to specific initiation sites and are then released. Extracytoplasmic function (ECF) sigma factors are held in an inactive form by an anti-sigma factor until released by regulated intramembrane proteolysis. The polypeptide is ECF RNA polymerase sigma factor SigK (sigK) (Mycobacterium tuberculosis (strain ATCC 25177 / H37Ra)).